Consider the following 295-residue polypeptide: MEIRRRPPNPTVRVENLEYAVPHREAQAKNILEEIVWHKDIEIKNFKKIVSLEDLIKKIENLPTPKDFYKNILESKIKPGVIAEIKKASPSKGVIRKDFNPENIAICYEGLGASCISVLTDKKFFQGSYEILETVRKSTNLPLLCKDFIISAYQIYKARVSGADAILLIAAILSDDDLIYLKKIADNLKMSVLVEVHNSYELERILKLKSFNLIGINNRDLKTFKTDLKTSKELMNTYADIFLKQNIIPISESGINCAEDLESLRSIGIMGVLIGETFMRETDIEQSFKKLFNSI.

The protein belongs to the TrpC family.

The catalysed reaction is 1-(2-carboxyphenylamino)-1-deoxy-D-ribulose 5-phosphate + H(+) = (1S,2R)-1-C-(indol-3-yl)glycerol 3-phosphate + CO2 + H2O. The protein operates within amino-acid biosynthesis; L-tryptophan biosynthesis; L-tryptophan from chorismate: step 4/5. This chain is Indole-3-glycerol phosphate synthase, found in Prochlorococcus marinus (strain AS9601).